The following is a 228-amino-acid chain: U1 small nuclear ribonucleoprotein C-2 (228 aa).

The Matrin-type zinc-finger motif lies at 4 to 36 (YYCDYCDTYLTHDSPSVRKQHNAGYKHKANVRT). The tract at residues 105-228 (PGVRPPILPA…SYALPSEGNH (124 aa)) is disordered. Composition is skewed to pro residues over residues 107-156 (VRPP…PPGS) and 164-175 (LPRPPTLPPPTS). Residues 178–190 (PGAPIPNSAAPPA) show a composition bias toward low complexity. Positions 196 to 214 (PPAPAGPTSGAPPAPPTAP) are enriched in pro residues.

This sequence belongs to the U1 small nuclear ribonucleoprotein C family. In terms of assembly, U1 snRNP is composed of the 7 core Sm proteins B/B', D1, D2, D3, E, F and G that assemble in a heptameric protein ring on the Sm site of the small nuclear RNA to form the core snRNP, and at least 3 U1 snRNP-specific proteins U1-70K, U1-A and U1-C. U1-C interacts with U1 snRNA and the 5' splice-site region of the pre-mRNA.

It localises to the nucleus. Functionally, component of the spliceosomal U1 snRNP, which is essential for recognition of the pre-mRNA 5' splice-site and the subsequent assembly of the spliceosome. U1-C is directly involved in initial 5' splice-site recognition for both constitutive and regulated alternative splicing. The interaction with the 5' splice-site seems to precede base-pairing between the pre-mRNA and the U1 snRNA. Stimulates commitment or early (E) complex formation by stabilizing the base pairing of the 5' end of the U1 snRNA and the 5' splice-site region. This chain is U1 small nuclear ribonucleoprotein C-2, found in Sorghum bicolor (Sorghum).